The sequence spans 235 residues: Elongation factor Tu (235 aa).

The region spanning 1–125 (KNMITGATQM…DGDKYIPTPS (125 aa)) is the tr-type G domain. Residue 47 to 50 (NKQD) coordinates GTP.

Belongs to the TRAFAC class translation factor GTPase superfamily. Classic translation factor GTPase family. EF-Tu/EF-1A subfamily. Monomer.

The protein localises to the cytoplasm. It catalyses the reaction GTP + H2O = GDP + phosphate + H(+). Its function is as follows. GTP hydrolase that promotes the GTP-dependent binding of aminoacyl-tRNA to the A-site of ribosomes during protein biosynthesis. The sequence is that of Elongation factor Tu (tufA) from Leptolyngbya boryana (Plectonema boryanum).